Consider the following 979-residue polypeptide: MHC class II regulatory factor RFX1 (979 aa).

Disordered stretches follow at residues 1 to 136, 181 to 227, and 370 to 405; these read MATQ…QVVQ, QSAA…PTGT, and TSTG…STGG. The segment covering 12-44 has biased composition (pro residues); that stretch reads APPPSQPPQAPPQAQPQPPPPPPPAAPQPPQPP. Over residues 45–73 the composition is skewed to low complexity; sequence TAAATPQPQYVTELQSPQPQAQPPGGQKQ. S60 is modified (phosphoserine). Residues 81–96 show a composition bias toward pro residues; that stretch reads VPAPSQPTGAPTPSPA. Positions 114 to 126 are enriched in polar residues; that stretch reads ETVSEASPGSTAS. Over residues 127–136 the composition is skewed to low complexity; it reads QTGVPTQVVQ. 2 stretches are compositionally biased toward polar residues: residues 190-203 and 209-220; these read GQVS…QQVH and SPVQANSSSSKT. Low complexity predominate over residues 370-379; sequence TSTGAGASNS. Gly residues predominate over residues 380–405; it reads SGGGGSGGGGGGGGGGGGGGSGSTGG. Residues 438-513 constitute a DNA-binding region (RFX-type winged-helix); it reads TVQWLLDNYE…YHYYGLRIKA (76 aa). The tract at residues 744-979 is necessary for dimerization; sequence FAQTLRRYTS…GLFVQALPSS (236 aa). The interval 915–960 is disordered; the sequence is SLNPLDPDKDEEEEEEEESEDELPQDISLAAGGESPALGPETLEPP. Residues 922–938 show a composition bias toward acidic residues; sequence DKDEEEEEEEESEDELP. Phosphoserine occurs at positions 978 and 979.

The protein belongs to the RFX family. As to quaternary structure, homodimer; binds DNA as a homodimer. Heterodimer; heterodimerizes with RFX2 and RFX3.

The protein localises to the nucleus. In terms of biological role, regulatory factor essential for MHC class II genes expression. Binds to the X boxes of MHC class II genes. Also binds to an inverted repeat (ENH1) required for hepatitis B virus genes expression and to the most upstream element (alpha) of the RPL30 promoter. This is MHC class II regulatory factor RFX1 (RFX1) from Homo sapiens (Human).